We begin with the raw amino-acid sequence, 219 residues long: Flagellar transcriptional regulator FlhC (219 aa).

Zn(2+)-binding residues include C137, C140, C157, and C160.

It belongs to the FlhC family. In terms of assembly, heterohexamer composed of two FlhC and four FlhD subunits. Each FlhC binds a FlhD dimer, forming a heterotrimer, and a hexamer assembles by dimerization of two heterotrimers. It depends on Zn(2+) as a cofactor.

It is found in the cytoplasm. Functionally, functions in complex with FlhD as a master transcriptional regulator that regulates transcription of several flagellar and non-flagellar operons by binding to their promoter region. Activates expression of class 2 flagellar genes, including fliA, which is a flagellum-specific sigma factor that turns on the class 3 genes. Also regulates genes whose products function in a variety of physiological pathways. The chain is Flagellar transcriptional regulator FlhC from Paraburkholderia phymatum (strain DSM 17167 / CIP 108236 / LMG 21445 / STM815) (Burkholderia phymatum).